Here is a 1249-residue protein sequence, read N- to C-terminus: LRR receptor-like serine/threonine-protein kinase GSO1 (1249 aa).

Residues 1 to 18 form the signal peptide; that stretch reads MQPLVLLLLFILCFSGLG. The Extracellular portion of the chain corresponds to 19–876; sequence QPGIINNDLQ…QQGLSARSVV (858 aa). N77 and N117 each carry an N-linked (GlcNAc...) asparagine glycan. 31 LRR repeats span residues 94-118, 119-142, 144-166, 168-190, 191-214, 216-238, 239-262, 264-285, 286-310, 312-334, 336-359, 360-383, 385-407, 408-431, 433-455, 457-479, 480-503, 505-527, 528-551, 553-574, 576-598, 599-622, 623-646, 648-670, 671-694, 696-718, 719-742, 744-766, 767-791, 792-815, and 817-838; these read FDNL…LSNL, TSLE…LGSL, NIRS…LGNL, NLQM…LGRL, VRVQ…LGNC, DLTV…LGRL, ENLE…LGEM, QLQY…SLAD, LGNL…FWNM, QLLD…ICSN, TNLE…LSKC, QSLK…LFEL, ELTD…ISNL, TNLQ…ISAL, KLEV…IGNC, SLKM…IGRL, KELN…LGNC, QLNI…FGFL, KGLE…LISL, NLTR…LCGS, SYLS…LGNS, QNLD…LGKI, RELS…LVLC, KLTH…LGKL, SQLG…LFNC, KLLV…IGNL, GALN…MGKL, KLYE…IGQL, QDLQ…IGTL, SKLE…VGDM, and SLGY…QFSR. N-linked (GlcNAc...) asparagine glycans are attached at residues N213, N228, and N248. N-linked (GlcNAc...) asparagine glycosylation is found at N298, N309, and N334. N369, N393, and N406 each carry an N-linked (GlcNAc...) asparagine glycan. N454 carries an N-linked (GlcNAc...) asparagine glycan. N-linked (GlcNAc...) asparagine glycosylation is found at N537, N553, N558, and N565. 2 N-linked (GlcNAc...) asparagine glycosylation sites follow: N693 and N708. N-linked (GlcNAc...) asparagine glycosylation is present at N779. The N-linked (GlcNAc...) asparagine glycan is linked to N822. The helical transmembrane segment at 877–897 threads the bilayer; sequence IISAISALTAIGLMILVIALF. The Cytoplasmic portion of the chain corresponds to 898–1249; sequence FKQRHDFFKK…NNRTAGYKKL (352 aa). Phosphothreonine is present on T948. Residues 951 to 1240 form the Protein kinase domain; sequence LSEEFMIGSG…ACDSLLHVYN (290 aa). ATP-binding positions include 957-965 and K979; that span reads IGSGGSGKV. 2 positions are modified to phosphotyrosine: Y1027 and Y1071. The Proton acceptor role is filled by D1084. A phosphotyrosine mark is found at Y1129 and Y1136.

Belongs to the protein kinase superfamily. Ser/Thr protein kinase family. In terms of assembly, interacts with CIF1 and CIF2. Mostly expressed in siliques, seeds, developing embryos and seedlings, detected in flower buds and roots, but not in leaves or stems.

The protein localises to the cell membrane. The catalysed reaction is L-seryl-[protein] + ATP = O-phospho-L-seryl-[protein] + ADP + H(+). The enzyme catalyses L-threonyl-[protein] + ATP = O-phospho-L-threonyl-[protein] + ADP + H(+). In terms of biological role, together with GSO2, receptor-like serine/threonine-kinase required during the development of the epidermal surface in embryos and cotyledons. In coordination with GSO2, regulates root growth through control of cell division and cell fate specification. Controls seedling root growth by modulating sucrose response after germination. Receptor of the peptide hormones CIF1 and CIF2 required for contiguous Casparian strip diffusion barrier formation in roots. Required for localizing CASP proteins into the Casparian strip following an uninterrupted, ring-like domain, to trigger endodermal differentiation and thus regulate potassium ion (K) homeostasis. Involved in the maintenance of water transport and root pressure. May also be involved in the regulation of suberin accumulation in the endodermis. This Arabidopsis thaliana (Mouse-ear cress) protein is LRR receptor-like serine/threonine-protein kinase GSO1.